A 208-amino-acid chain; its full sequence is MKKLNTLLLVLGSLVATPSFADDSQALQDQLASLKSFKAQFSQKVTDKQGQAVMQGEGTIALQQPMMIRWQQTNPDDTLFVSNGDKTYYFDSFAEQVTIMQTSSLIDSTPFVLLTSKDPAQWEKYSVLATNSGFSVTPNKGVESQVEQLDITFAGNEQGLAKLVVTDNSGQLSSFTFNDAKVNTPLDKSTFEFTPPEGVEIDDQSNGE.

The N-terminal stretch at 1–21 (MKKLNTLLLVLGSLVATPSFA) is a signal peptide. The interval 188–208 (KSTFEFTPPEGVEIDDQSNGE) is disordered. Acidic residues predominate over residues 199 to 208 (VEIDDQSNGE).

The protein belongs to the LolA family. As to quaternary structure, monomer.

The protein localises to the periplasm. Functionally, participates in the translocation of lipoproteins from the inner membrane to the outer membrane. Only forms a complex with a lipoprotein if the residue after the N-terminal Cys is not an aspartate (The Asp acts as a targeting signal to indicate that the lipoprotein should stay in the inner membrane). In Pseudoalteromonas translucida (strain TAC 125), this protein is Outer-membrane lipoprotein carrier protein.